Reading from the N-terminus, the 336-residue chain is F420-dependent glucose-6-phosphate dehydrogenase (336 aa).

Asp-39 serves as a coordination point for coenzyme F420-(gamma-Glu)n. Residue His-40 is the Proton donor of the active site. Coenzyme F420-(gamma-Glu)n-binding positions include Thr-76 and 107 to 108; that span reads TG. Residue Glu-109 is the Proton acceptor of the active site. Coenzyme F420-(gamma-Glu)n-binding positions include Asn-112, 177–178, and 180–181; these read GG and AV. Substrate is bound by residues Thr-195, Lys-198, Lys-259, and Arg-283.

It belongs to the F420-dependent glucose-6-phosphate dehydrogenase family. As to quaternary structure, homodimer.

It carries out the reaction oxidized coenzyme F420-(gamma-L-Glu)(n) + D-glucose 6-phosphate + H(+) = 6-phospho-D-glucono-1,5-lactone + reduced coenzyme F420-(gamma-L-Glu)(n). Its function is as follows. Catalyzes the coenzyme F420-dependent oxidation of glucose 6-phosphate (G6P) to 6-phosphogluconolactone. Appears to have a role in resistance to oxidative stress, via its consumption of G6P that serves as a source of reducing power to combat oxidative stress in mycobacteria. The chain is F420-dependent glucose-6-phosphate dehydrogenase from Mycobacterium avium (strain 104).